The chain runs to 513 residues: GMP synthase [glutamine-hydrolyzing] (513 aa).

A Glutamine amidotransferase type-1 domain is found at 9-198 (LILVLDFGSQ…VRRVCDCKGQ (190 aa)). Cys86 serves as the catalytic Nucleophile. Catalysis depends on residues His172 and Glu174. One can recognise a GMPS ATP-PPase domain in the interval 199-388 (WTMENFIEIE…LGIPEHLVWR (190 aa)). 226 to 232 (SGGVDSS) is an ATP binding site.

Homodimer.

It catalyses the reaction XMP + L-glutamine + ATP + H2O = GMP + L-glutamate + AMP + diphosphate + 2 H(+). Its pathway is purine metabolism; GMP biosynthesis; GMP from XMP (L-Gln route): step 1/1. In terms of biological role, catalyzes the synthesis of GMP from XMP. This Staphylococcus aureus (strain Mu3 / ATCC 700698) protein is GMP synthase [glutamine-hydrolyzing].